Reading from the N-terminus, the 149-residue chain is Nascent polypeptide-associated complex subunit beta-2 (149 aa).

An NAC-A/B domain is found at D38–Y103.

Belongs to the NAC-beta family. As to quaternary structure, part of the nascent polypeptide-associated complex (NAC), consisting of EGD2 and either EGD1 or BTT1. NAC associates with ribosomes via EGD1 or BTT1.

It localises to the cytoplasm. Its subcellular location is the nucleus. Its function is as follows. Acts as a component of the nascent polypeptide-associated complex (NAC), which promotes mitochondrial protein import by enhancing productive ribosome interactions with the outer mitochondrial membrane. Also blocks the inappropriate interaction of ribosomes translating non-secretory nascent polypeptides with translocation sites in the membrane of the endoplasmic reticulum. BTT1 may act as a transcription factor that exert a negative effect on the expression of several genes that are transcribed by RNA polymerase II. In Saccharomyces cerevisiae (strain YJM789) (Baker's yeast), this protein is Nascent polypeptide-associated complex subunit beta-2 (BTT1).